A 596-amino-acid polypeptide reads, in one-letter code: Elongation factor 4 (596 aa).

Residues 2 to 184 (RNIRNFSIIA…AIVHRIPPPT (183 aa)) form the tr-type G domain. Residues 14–19 (DHGKST) and 131–134 (NKID) contribute to the GTP site.

Belongs to the TRAFAC class translation factor GTPase superfamily. Classic translation factor GTPase family. LepA subfamily.

The protein resides in the cell inner membrane. It carries out the reaction GTP + H2O = GDP + phosphate + H(+). Its function is as follows. Required for accurate and efficient protein synthesis under certain stress conditions. May act as a fidelity factor of the translation reaction, by catalyzing a one-codon backward translocation of tRNAs on improperly translocated ribosomes. Back-translocation proceeds from a post-translocation (POST) complex to a pre-translocation (PRE) complex, thus giving elongation factor G a second chance to translocate the tRNAs correctly. Binds to ribosomes in a GTP-dependent manner. This Xanthomonas oryzae pv. oryzae (strain PXO99A) protein is Elongation factor 4.